The following is a 143-amino-acid chain: Probable glycine cleavage system H protein (143 aa).

The Lipoyl-binding domain maps to 36–118; the sequence is VATVGITDFA…YGEGWIFKIK (83 aa). Lys-77 carries the post-translational modification N6-lipoyllysine.

Belongs to the GcvH family. In terms of assembly, the glycine cleavage system is composed of four proteins: P, T, L and H. (R)-lipoate is required as a cofactor.

Its function is as follows. The glycine cleavage system catalyzes the degradation of glycine. The H protein shuttles the methylamine group of glycine from the P protein to the T protein. The sequence is that of Probable glycine cleavage system H protein from Aeropyrum pernix (strain ATCC 700893 / DSM 11879 / JCM 9820 / NBRC 100138 / K1).